Here is a 202-residue protein sequence, read N- to C-terminus: GTP cyclohydrolase 1 (202 aa).

Residues C93, H96, and C164 each contribute to the Zn(2+) site.

The protein belongs to the GTP cyclohydrolase I family. In terms of assembly, toroid-shaped homodecamer, composed of two pentamers of five dimers.

The enzyme catalyses GTP + H2O = 7,8-dihydroneopterin 3'-triphosphate + formate + H(+). The protein operates within cofactor biosynthesis; 7,8-dihydroneopterin triphosphate biosynthesis; 7,8-dihydroneopterin triphosphate from GTP: step 1/1. This is GTP cyclohydrolase 1 from Pelagibacter ubique (strain HTCC1062).